The primary structure comprises 555 residues: Glutamine--tRNA ligase (555 aa).

Positions 35–45 (PEPNGYLHIGH) match the 'HIGH' region motif. Residues 36 to 38 (EPN) and 42 to 48 (HIGHAKS) each bind ATP. 2 residues coordinate L-glutamine: Asp68 and Tyr213. Residues Thr232 and 262–263 (RL) contribute to the ATP site. Positions 269 to 273 (ITSKR) match the 'KMSKS' region motif.

This sequence belongs to the class-I aminoacyl-tRNA synthetase family. Monomer.

The protein localises to the cytoplasm. It carries out the reaction tRNA(Gln) + L-glutamine + ATP = L-glutaminyl-tRNA(Gln) + AMP + diphosphate. This chain is Glutamine--tRNA ligase, found in Ectopseudomonas mendocina (strain ymp) (Pseudomonas mendocina).